Here is a 247-residue protein sequence, read N- to C-terminus: Caffeoyl-CoA O-methyltransferase (247 aa).

Lys-21 is a substrate binding site. S-adenosyl-L-methionine contacts are provided by residues Thr-63, Glu-85, 87 to 88 (GV), Ser-93, Asp-111, and Ala-140. Substrate is bound at residue Asp-163. Asp-163 serves as a coordination point for a divalent metal cation. Position 165 (Asp-165) interacts with S-adenosyl-L-methionine. A divalent metal cation contacts are provided by Asp-189 and Asn-190. Asn-194 is a substrate binding site.

This sequence belongs to the class I-like SAM-binding methyltransferase superfamily. Cation-dependent O-methyltransferase family. CCoAMT subfamily. It depends on a divalent metal cation as a cofactor.

It catalyses the reaction (E)-caffeoyl-CoA + S-adenosyl-L-methionine = (E)-feruloyl-CoA + S-adenosyl-L-homocysteine + H(+). It participates in aromatic compound metabolism; phenylpropanoid biosynthesis. Methylates caffeoyl-CoA to feruloyl-CoA and 5-hydroxyferuloyl-CoA to sinapoyl-CoA. Plays a role in the synthesis of feruloylated polysaccharides. Involved in the reinforcement of the plant cell wall. Also involved in the responding to wounding or pathogen challenge by the increased formation of cell wall-bound ferulic acid polymers. This is Caffeoyl-CoA O-methyltransferase from Populus tremuloides (Quaking aspen).